A 245-amino-acid chain; its full sequence is NAD(P)H-hydrate epimerase (245 aa).

The YjeF N-terminal domain occupies 21-221 (MREIDRLAVQ…DLGIPPAVYT (201 aa)). Residue 72 to 76 (GNGGG) coordinates (6S)-NADPHX. Residues Asn-73 and Asp-135 each contribute to the K(+) site. Residues 139–145 (GYSLLGA) and Asp-168 each bind (6S)-NADPHX. Residue Ser-171 participates in K(+) binding.

Belongs to the NnrE/AIBP family. K(+) serves as cofactor.

The enzyme catalyses (6R)-NADHX = (6S)-NADHX. It carries out the reaction (6R)-NADPHX = (6S)-NADPHX. Its function is as follows. Catalyzes the epimerization of the S- and R-forms of NAD(P)HX, a damaged form of NAD(P)H that is a result of enzymatic or heat-dependent hydration. This is a prerequisite for the S-specific NAD(P)H-hydrate dehydratase to allow the repair of both epimers of NAD(P)HX. The protein is NAD(P)H-hydrate epimerase of Dehalogenimonas lykanthroporepellens (strain ATCC BAA-1523 / JCM 15061 / BL-DC-9).